The chain runs to 151 residues: Caveolin-3 (151 aa).

Over 1 to 83 the chain is Cytoplasmic; sequence MMAEEHTDLE…RLLSTLLGVP (83 aa). K38 participates in a covalent cross-link: Glycyl lysine isopeptide (Lys-Gly) (interchain with G-Cter in SUMO3). Positions 64-114 are required for interaction with DAG1; that stretch reads TFTVSKYWCYRLLSTLLGVPLALLWGFLFACISFCHIWAVVPCIKSYLIEI. Positions 84–104 form an intramembrane region, helical; the sequence is LALLWGFLFACISFCHIWAVV. Residues 105–151 are Cytoplasmic-facing; sequence PCIKSYLIEIQCISHIYSLCIRTFCNPLFAALGQVCSSIKVVLRKEV.

This sequence belongs to the caveolin family. As to quaternary structure, homooligomer. Interacts with DLG1 and KCNA5; forms a ternary complex. Interacts with TRIM72. Interacts with MUSK; may regulate MUSK signaling. Interacts with DAG1 (via its C-terminal); the interaction prevents binding of DAG1 with DMD. Interacts with DYSF. Interacts with POPDC1. Interacts with CAVIN1 and CAVIN2. Interacts with CAVIN4. Sumoylation with SUMO3 by PIAS4 may reduce agonist-induced internalization and desensitization of adrenergic receptor ABRD2. Expressed predominantly in muscle.

It is found in the golgi apparatus membrane. The protein resides in the cell membrane. The protein localises to the membrane. Its subcellular location is the caveola. It localises to the sarcolemma. Its function is as follows. May act as a scaffolding protein within caveolar membranes. Interacts directly with G-protein alpha subunits and can functionally regulate their activity. May also regulate voltage-gated potassium channels. Plays a role in the sarcolemma repair mechanism of both skeletal muscle and cardiomyocytes that permits rapid resealing of membranes disrupted by mechanical stress. Mediates the recruitment of CAVIN2 and CAVIN3 proteins to the caveolae. This chain is Caveolin-3 (CAV3), found in Homo sapiens (Human).